We begin with the raw amino-acid sequence, 202 residues long: ATP-dependent Clp protease proteolytic subunit (202 aa).

Residue Ser101 is the Nucleophile of the active site. His126 is a catalytic residue.

Belongs to the peptidase S14 family. Component of the chloroplastic Clp protease core complex.

The protein resides in the plastid. Its subcellular location is the chloroplast stroma. The catalysed reaction is Hydrolysis of proteins to small peptides in the presence of ATP and magnesium. alpha-casein is the usual test substrate. In the absence of ATP, only oligopeptides shorter than five residues are hydrolyzed (such as succinyl-Leu-Tyr-|-NHMec, and Leu-Tyr-Leu-|-Tyr-Trp, in which cleavage of the -Tyr-|-Leu- and -Tyr-|-Trp bonds also occurs).. Its function is as follows. Cleaves peptides in various proteins in a process that requires ATP hydrolysis. Has a chymotrypsin-like activity. Plays a major role in the degradation of misfolded proteins. This is ATP-dependent Clp protease proteolytic subunit from Buxus microphylla (Littleleaf boxwood).